Consider the following 421-residue polypeptide: Gamma-glutamyl phosphate reductase (421 aa).

This sequence belongs to the gamma-glutamyl phosphate reductase family.

The protein localises to the cytoplasm. The catalysed reaction is L-glutamate 5-semialdehyde + phosphate + NADP(+) = L-glutamyl 5-phosphate + NADPH + H(+). It functions in the pathway amino-acid biosynthesis; L-proline biosynthesis; L-glutamate 5-semialdehyde from L-glutamate: step 2/2. Its function is as follows. Catalyzes the NADPH-dependent reduction of L-glutamate 5-phosphate into L-glutamate 5-semialdehyde and phosphate. The product spontaneously undergoes cyclization to form 1-pyrroline-5-carboxylate. This chain is Gamma-glutamyl phosphate reductase, found in Pseudomonas syringae pv. tomato (strain ATCC BAA-871 / DC3000).